The primary structure comprises 360 residues: Protein Wnt-2 (360 aa).

Positions 1–25 (MNAPVGGIWLWLPLLLTWLSPEVSS) are cleaved as a signal peptide. Cystine bridges form between C76–C87, C127–C135, C137–C157, C206–C220, C208–C215, C278–C309, C294–C304, C308–C348, C324–C339, C326–C336, and C331–C332. Residue S212 is the site of O-palmitoleoyl serine; by PORCN attachment. N-linked (GlcNAc...) asparagine glycosylation is present at N295.

It belongs to the Wnt family. In terms of processing, palmitoleoylation is required for efficient binding to frizzled receptors. Depalmitoleoylation leads to Wnt signaling pathway inhibition.

Its subcellular location is the secreted. It localises to the extracellular space. The protein localises to the extracellular matrix. Its function is as follows. Ligand for members of the frizzled family of seven transmembrane receptors. Probable developmental protein. May be a signaling molecule which affects the development of discrete regions of tissues. Is likely to signal over only few cell diameters. This chain is Protein Wnt-2 (WNT2), found in Rhinolophus ferrumequinum (Greater horseshoe bat).